Consider the following 542-residue polypeptide: MFCYQCEQTAKGEGCTKIGVCGKQPEVADLQDLLLYALKGLALHAVEGAKVGVNDHETNVFTCEALFSTLTNVNFDPARFQVLIPRVVEYREKLKAKVKAAGGKVDFADPAATFTPAKTLEGLVAQGANVGLKSEPELPPDIVSLKHTLLFGLKGISAYADHANILGQHDDAVYAFIYEALAATLRKDIELGDWLKLVLKCGEMNLRTMELLDAANTGVYGHPVPTSVPLGPKQGKAILVSGHDLKDLEELLKQTEGKGINIYTHGEMLPTHGYPGLKKYAHFYGHYGTAWQNQQKEFSKFPGAILMTTNCIQKPQQAYTGNIFTTGLVGWPDVPHVTNRDFSPVIERALALPGFPETVNGKSVMVGFGRNTILGVADKVIEAVKNKNIRHFFLVAGCDGAKPGRNYYTEFVEKVPKDCVVLTLACGKFRFFDKDLGTIGGLPRLMDVGQCNDAYSAIQVAVALAKAFNCGVNDLPLSLVLSWYEQKAVAILLTLLYLGIRNIRLGPSLPAFVSGNVLDVLVKNFDIKPITTPDEDLKAILG.

[4Fe-4S] cluster contacts are provided by C3, C6, C15, and C21. Hybrid [4Fe-2O-2S] cluster is bound by residues H243, E267, C311, C398, C426, C451, E485, and K487. C398 carries the cysteine persulfide modification.

Belongs to the HCP family. [4Fe-4S] cluster serves as cofactor. The cofactor is hybrid [4Fe-2O-2S] cluster.

It localises to the cytoplasm. The catalysed reaction is A + NH4(+) + H2O = hydroxylamine + AH2 + H(+). Functionally, catalyzes the reduction of hydroxylamine to form NH(3) and H(2)O. This Syntrophobacter fumaroxidans (strain DSM 10017 / MPOB) protein is Hydroxylamine reductase.